The primary structure comprises 147 residues: Nucleoside diphosphate kinase (147 aa).

6 residues coordinate ATP: Lys9, Phe57, Arg85, Thr91, Arg102, and Asn112. His115 (pros-phosphohistidine intermediate) is an active-site residue.

Belongs to the NDK family. Homotetramer. Requires Mg(2+) as cofactor.

The protein localises to the cytoplasm. It carries out the reaction a 2'-deoxyribonucleoside 5'-diphosphate + ATP = a 2'-deoxyribonucleoside 5'-triphosphate + ADP. The enzyme catalyses a ribonucleoside 5'-diphosphate + ATP = a ribonucleoside 5'-triphosphate + ADP. Its function is as follows. Major role in the synthesis of nucleoside triphosphates other than ATP. The ATP gamma phosphate is transferred to the NDP beta phosphate via a ping-pong mechanism, using a phosphorylated active-site intermediate. This chain is Nucleoside diphosphate kinase, found in Thermosipho africanus (strain TCF52B).